The chain runs to 533 residues: Laccase-2 (533 aa).

The first 23 residues, 1 to 23, serve as a signal peptide directing secretion; sequence MFPGARILATLTLALHLLHGAHA. Plastocyanin-like domains lie at 25-171, 173-336, and 382-501; these read IGPA…LSLY, IDNA…LETN, and TAPV…FAED. The Cu cation site is built by His-98, His-100, His-143, and His-145. Disulfide bonds link Cys-119/Cys-516 and Cys-151/Cys-238. 3 residues coordinate Cu cation: His-427, His-430, and His-432. N-linked (GlcNAc...) (high mannose) asparagine glycosylation occurs at Asn-467. Residues His-483, Cys-484, His-485, and His-489 each contribute to the Cu cation site.

Belongs to the multicopper oxidase family. Requires Cu cation as cofactor. Post-translationally, N-glycosylated at Asn-467; contains a high-mannose glycan with a varying number of mannose residues.

It localises to the secreted. It carries out the reaction 4 hydroquinone + O2 = 4 benzosemiquinone + 2 H2O. Functionally, lignin degradation and detoxification of lignin-derived products. The polypeptide is Laccase-2 (POX2) (Pleurotus ostreatus (Oyster mushroom)).